Consider the following 1579-residue polypeptide: DNA-directed RNA polymerase subunit beta' (1579 aa).

The Zn(2+) site is built by Cys-65, Cys-67, Cys-80, and Cys-83. The Mg(2+) site is built by Asp-601, Asp-603, and Asp-605. Zn(2+)-binding residues include Cys-938, Cys-1012, Cys-1019, and Cys-1022.

Belongs to the RNA polymerase beta' chain family. As to quaternary structure, the RNAP catalytic core consists of 2 alpha, 1 beta, 1 beta' and 1 omega subunit. When a sigma factor is associated with the core the holoenzyme is formed, which can initiate transcription. Mg(2+) is required as a cofactor. It depends on Zn(2+) as a cofactor.

The enzyme catalyses RNA(n) + a ribonucleoside 5'-triphosphate = RNA(n+1) + diphosphate. Functionally, DNA-dependent RNA polymerase catalyzes the transcription of DNA into RNA using the four ribonucleoside triphosphates as substrates. This Sulfurihydrogenibium sp. (strain YO3AOP1) protein is DNA-directed RNA polymerase subunit beta'.